Reading from the N-terminus, the 299-residue chain is Nucleotide-binding protein Moth_0258 (299 aa).

14-21 (GLSGAGKT) is a binding site for ATP. 68-71 (DIRG) is a GTP binding site.

It belongs to the RapZ-like family.

In terms of biological role, displays ATPase and GTPase activities. This chain is Nucleotide-binding protein Moth_0258, found in Moorella thermoacetica (strain ATCC 39073 / JCM 9320).